Here is a 167-residue protein sequence, read N- to C-terminus: Large ribosomal subunit protein uL10 (167 aa).

Belongs to the universal ribosomal protein uL10 family. As to quaternary structure, part of the ribosomal stalk of the 50S ribosomal subunit. The N-terminus interacts with L11 and the large rRNA to form the base of the stalk. The C-terminus forms an elongated spine to which L12 dimers bind in a sequential fashion forming a multimeric L10(L12)X complex.

Forms part of the ribosomal stalk, playing a central role in the interaction of the ribosome with GTP-bound translation factors. The polypeptide is Large ribosomal subunit protein uL10 (Dichelobacter nodosus (strain VCS1703A)).